The following is a 580-amino-acid chain: Arginine--tRNA ligase (580 aa).

A 'HIGH' region motif is present at residues 131–141 (ANPTGPLHVGH).

It belongs to the class-I aminoacyl-tRNA synthetase family. As to quaternary structure, monomer.

The protein localises to the cytoplasm. It catalyses the reaction tRNA(Arg) + L-arginine + ATP = L-arginyl-tRNA(Arg) + AMP + diphosphate. This Roseobacter denitrificans (strain ATCC 33942 / OCh 114) (Erythrobacter sp. (strain OCh 114)) protein is Arginine--tRNA ligase.